A 504-amino-acid chain; its full sequence is Glycine--tRNA ligase (504 aa).

Substrate-binding residues include arginine 99 and glutamate 189. Residues 221 to 223 (RNE), 231 to 236 (FRVREL), 306 to 307 (EI), and 365 to 368 (GVDR) contribute to the ATP site. 236–240 (LEQME) is a substrate binding site. 361–365 (EPSAG) contacts substrate.

This sequence belongs to the class-II aminoacyl-tRNA synthetase family. As to quaternary structure, homodimer.

Its subcellular location is the cytoplasm. It catalyses the reaction tRNA(Gly) + glycine + ATP = glycyl-tRNA(Gly) + AMP + diphosphate. Its function is as follows. Catalyzes the attachment of glycine to tRNA(Gly). In Deinococcus geothermalis (strain DSM 11300 / CIP 105573 / AG-3a), this protein is Glycine--tRNA ligase.